Consider the following 524-residue polypeptide: MSDRVIIFDTTLRDGEQALAASLTVKEKLQIAQALERLGVDVMEVGFPVSSPGDFQSVQTIARHIKQSRVCALARALPKDIDAAGEALRVAEAFRIHTFISTSSIHVESKLKKSFEDVLEMGVSAIKHARRYTDDVEFSCEDAGRTPIDNLCRMVEAAIKAGARTINIPDTVGYTVPTEFSGIIQTLFNRVPNIDQAIISVHCHDDLGLSVANSIGAVQMGARQIECTINGIGERAGNCSLEEVAMILKTRADLLGVHTNIRHSEIHRTSALVSQLCNMPVQPNKAIVGANAFSHSSGIHQDGVLKAKNTYEIITPESIGLTQNNLNMTSRSGRHVIKHRMESMGYAESSYDLDDLYGKFLTLADKKGQVFDYDLEALAFFSQIHEEPEHFKLEYLGVQSGSSVMATASVKLKVGQEIVSEAATGNGPVDAVYQCINRITGYEISIDKYELKGKGEGKNALGQVDIVAQYKGRKFHGMGLATDIIESSAQALIHVINSIWRADQVAEQMERNVAKTDKINTESV.

A Pyruvate carboxyltransferase domain is found at 5–267 (VIIFDTTLRD…HTNIRHSEIH (263 aa)). Residues D14, H202, H204, and N238 each coordinate Mn(2+). The interval 392 to 524 (KLEYLGVQSG…KTDKINTESV (133 aa)) is regulatory domain.

Belongs to the alpha-IPM synthase/homocitrate synthase family. LeuA type 1 subfamily. In terms of assembly, homodimer. The cofactor is Mn(2+).

The protein localises to the cytoplasm. It catalyses the reaction 3-methyl-2-oxobutanoate + acetyl-CoA + H2O = (2S)-2-isopropylmalate + CoA + H(+). It participates in amino-acid biosynthesis; L-leucine biosynthesis; L-leucine from 3-methyl-2-oxobutanoate: step 1/4. In terms of biological role, catalyzes the condensation of the acetyl group of acetyl-CoA with 3-methyl-2-oxobutanoate (2-ketoisovalerate) to form 3-carboxy-3-hydroxy-4-methylpentanoate (2-isopropylmalate). This Aeromonas hydrophila subsp. hydrophila (strain ATCC 7966 / DSM 30187 / BCRC 13018 / CCUG 14551 / JCM 1027 / KCTC 2358 / NCIMB 9240 / NCTC 8049) protein is 2-isopropylmalate synthase.